A 714-amino-acid polypeptide reads, in one-letter code: EtfAB:quinone oxidoreductase (714 aa).

6 helical membrane-spanning segments follow: residues 25–45 (YEWL…FGFW), 87–107 (AGWM…AAGI), 125–145 (IGFS…VMVL), 164–184 (DGWI…IEGL), 207–227 (PFGW…MLMW), and 236–256 (MAIA…HIFA). 2 consecutive 4Fe-4S ferredoxin-type domains span residues 293 to 324 (WKDL…LNPK) and 375 to 405 (YDVV…HIPK). 8 residues coordinate [4Fe-4S] cluster: Cys-302, Cys-305, Cys-308, Cys-312, Cys-386, Cys-389, Cys-392, and Cys-396.

In terms of assembly, might constitute a membrane-associated complex with EtfA (Swol_0697), EtfB (Swol_0696), and the butyryl-CoA dehydrogenase Swol_1933 and/or Swol_2052. The cofactor is [4Fe-4S] cluster.

Its subcellular location is the cell membrane. It functions in the pathway lipid metabolism; butanoate metabolism. In terms of biological role, oxidoreductase involved in syntrophic growth of S.wolfei with butyrate. Is presumed to link the electron flow from butyryl-CoA dehydrogenases to the membrane, in conjunction with the electron transfer flavoprotein EtfAB. May transfer electrons to the menaquinone pool of the membrane. In Syntrophomonas wolfei subsp. wolfei (strain DSM 2245B / Goettingen), this protein is EtfAB:quinone oxidoreductase.